An 85-amino-acid polypeptide reads, in one-letter code: Progonadoliberin-2 (85 aa).

A signal peptide spans Met-1 to Gly-23. At Gln-24 the chain carries Pyrrolidone carboxylic acid. At Gly-33 the chain carries Glycine amide.

The protein belongs to the GnRH family. Midbrain tegmentum.

Its subcellular location is the secreted. Its function is as follows. Stimulates the secretion of gonadotropins. The polypeptide is Progonadoliberin-2 (gnrh2) (Verasper moseri (Barfin flounder)).